A 400-amino-acid polypeptide reads, in one-letter code: Acetate kinase (400 aa).

Asparagine 7 provides a ligand contact to Mg(2+). Lysine 14 contacts ATP. Arginine 91 is a substrate binding site. The Proton donor/acceptor role is filled by aspartate 148. ATP-binding positions include 208–212 (HLGNG), 284–286 (DMR), and 332–336 (GVGEN). Glutamate 384 lines the Mg(2+) pocket.

This sequence belongs to the acetokinase family. Homodimer. It depends on Mg(2+) as a cofactor. Mn(2+) serves as cofactor.

It localises to the cytoplasm. It carries out the reaction acetate + ATP = acetyl phosphate + ADP. It functions in the pathway metabolic intermediate biosynthesis; acetyl-CoA biosynthesis; acetyl-CoA from acetate: step 1/2. Functionally, catalyzes the formation of acetyl phosphate from acetate and ATP. Can also catalyze the reverse reaction. The protein is Acetate kinase of Coprothermobacter proteolyticus (strain ATCC 35245 / DSM 5265 / OCM 4 / BT).